The primary structure comprises 487 residues: UDP-glucose flavonoid 3-O-glucosyltransferase 7 (487 aa).

The active-site Proton acceptor is His-23. His-23 is a binding site for an anthocyanidin. The active-site Charge relay is Asp-121. Residues Ala-345, Gln-347, His-362, Trp-365, Asn-366, Ser-367, and Glu-370 each contribute to the UDP-alpha-D-glucose site. Residue Gly-385 coordinates an anthocyanidin. Positions 386 and 387 each coordinate UDP-alpha-D-glucose.

This sequence belongs to the UDP-glycosyltransferase family. In terms of tissue distribution, strongly expressed in achenes and receptacles.

It carries out the reaction a flavonol + UDP-alpha-D-glucose = a flavonol 3-O-beta-D-glucoside + UDP + H(+). Its function is as follows. Broad spectrum multifunctional glucosyltransferase. Catalyzes the formation of flavonol 3-O- and 4'-O-glucosides during fruit ripening. Accepted substrates include several flavonoids, hydroxycoumarins and beta-naphthols. Uses UDP-Glc as a sugar donor, but not UDP-Gal or UDP-GlcUA. May also be involved in detoxification of xenobiotics. This Fragaria ananassa (Strawberry) protein is UDP-glucose flavonoid 3-O-glucosyltransferase 7.